The chain runs to 207 residues: Holliday junction branch migration complex subunit RuvA (207 aa).

Residues 1–65 (MIGRIRGVIL…EDAQLLYGFN (65 aa)) are domain I. Residues 66-143 (QKQERALFRE…KGLNGDLFEQ (78 aa)) form a domain II region. The interval 144–158 (NGDIELPASASSKAP) is flexible linker. The segment at 159 to 207 (SAADIEAEASAALIALGYKPQEAAKMISRVATAGADSETLIKEALRAAI) is domain III.

Belongs to the RuvA family. As to quaternary structure, homotetramer. Forms an RuvA(8)-RuvB(12)-Holliday junction (HJ) complex. HJ DNA is sandwiched between 2 RuvA tetramers; dsDNA enters through RuvA and exits via RuvB. An RuvB hexamer assembles on each DNA strand where it exits the tetramer. Each RuvB hexamer is contacted by two RuvA subunits (via domain III) on 2 adjacent RuvB subunits; this complex drives branch migration. In the full resolvosome a probable DNA-RuvA(4)-RuvB(12)-RuvC(2) complex forms which resolves the HJ.

Its subcellular location is the cytoplasm. Its function is as follows. The RuvA-RuvB-RuvC complex processes Holliday junction (HJ) DNA during genetic recombination and DNA repair, while the RuvA-RuvB complex plays an important role in the rescue of blocked DNA replication forks via replication fork reversal (RFR). RuvA specifically binds to HJ cruciform DNA, conferring on it an open structure. The RuvB hexamer acts as an ATP-dependent pump, pulling dsDNA into and through the RuvAB complex. HJ branch migration allows RuvC to scan DNA until it finds its consensus sequence, where it cleaves and resolves the cruciform DNA. This Proteus mirabilis (strain HI4320) protein is Holliday junction branch migration complex subunit RuvA.